The chain runs to 185 residues: Ribonuclease HII (185 aa).

The 185-residue stretch at 1–185 (MIILGIDEAG…KSYKPIQLLL (185 aa)) folds into the RNase H type-2 domain. Asp-7, Glu-8, and Asp-99 together coordinate a divalent metal cation.

This sequence belongs to the RNase HII family. The cofactor is Mn(2+). It depends on Mg(2+) as a cofactor.

It localises to the cytoplasm. The catalysed reaction is Endonucleolytic cleavage to 5'-phosphomonoester.. Endonuclease that specifically degrades the RNA of RNA-DNA hybrids. In Francisella tularensis subsp. novicida (strain U112), this protein is Ribonuclease HII.